The primary structure comprises 485 residues: Glutamyl-tRNA(Gln) amidotransferase subunit A (485 aa).

Active-site charge relay system residues include Lys-82 and Ser-157. Ser-181 functions as the Acyl-ester intermediate in the catalytic mechanism.

Belongs to the amidase family. GatA subfamily. As to quaternary structure, heterotrimer of A, B and C subunits.

It catalyses the reaction L-glutamyl-tRNA(Gln) + L-glutamine + ATP + H2O = L-glutaminyl-tRNA(Gln) + L-glutamate + ADP + phosphate + H(+). Functionally, allows the formation of correctly charged Gln-tRNA(Gln) through the transamidation of misacylated Glu-tRNA(Gln) in organisms which lack glutaminyl-tRNA synthetase. The reaction takes place in the presence of glutamine and ATP through an activated gamma-phospho-Glu-tRNA(Gln). The protein is Glutamyl-tRNA(Gln) amidotransferase subunit A of Treponema denticola (strain ATCC 35405 / DSM 14222 / CIP 103919 / JCM 8153 / KCTC 15104).